The chain runs to 158 residues: GTP-dependent dephospho-CoA kinase (158 aa).

Asp-35, Val-36, Asp-54, Lys-56, Glu-109, and Asp-132 together coordinate GTP.

Belongs to the GTP-dependent DPCK family.

It carries out the reaction 3'-dephospho-CoA + GTP = GDP + CoA + H(+). Its pathway is cofactor biosynthesis; coenzyme A biosynthesis. Functionally, catalyzes the GTP-dependent phosphorylation of the 3'-hydroxyl group of dephosphocoenzyme A to form coenzyme A (CoA). This is GTP-dependent dephospho-CoA kinase from Methanococcus maripaludis (strain C5 / ATCC BAA-1333).